A 1370-amino-acid chain; its full sequence is DNA-directed RNA polymerase subunit beta (1370 aa).

Belongs to the RNA polymerase beta chain family. As to quaternary structure, the RNAP catalytic core consists of 2 alpha, 1 beta, 1 beta' and 1 omega subunit. When a sigma factor is associated with the core the holoenzyme is formed, which can initiate transcription.

It catalyses the reaction RNA(n) + a ribonucleoside 5'-triphosphate = RNA(n+1) + diphosphate. Functionally, DNA-dependent RNA polymerase catalyzes the transcription of DNA into RNA using the four ribonucleoside triphosphates as substrates. This Bordetella avium (strain 197N) protein is DNA-directed RNA polymerase subunit beta.